The primary structure comprises 116 residues: Ribosome-binding factor A (116 aa).

The protein belongs to the RbfA family. Monomer. Binds 30S ribosomal subunits, but not 50S ribosomal subunits or 70S ribosomes.

It is found in the cytoplasm. Its function is as follows. One of several proteins that assist in the late maturation steps of the functional core of the 30S ribosomal subunit. Associates with free 30S ribosomal subunits (but not with 30S subunits that are part of 70S ribosomes or polysomes). Required for efficient processing of 16S rRNA. May interact with the 5'-terminal helix region of 16S rRNA. In Streptococcus mutans serotype c (strain ATCC 700610 / UA159), this protein is Ribosome-binding factor A.